We begin with the raw amino-acid sequence, 295 residues long: Threonine/homoserine exporter RhtA (295 aa).

At 1–9 (MPGSLRKMP) the chain is on the cytoplasmic side. A helical transmembrane segment spans residues 10–30 (VWLPIVILLVAMASIQGGASL). In terms of domain architecture, EamA 1 spans 30–135 (LAKSLFPLVG…VLAVLGLWFL (106 aa)). The Periplasmic portion of the chain corresponds to 31-38 (AKSLFPLV). Residues 39 to 59 (GAPGVTALRLALGTLILIAFF) traverse the membrane as a helical segment. Residues 60-71 (KPWRLRFAKEQR) lie on the Cytoplasmic side of the membrane. A helical membrane pass occupies residues 72–92 (LPLLFYGVSLGGMNYLFYLSI). Residue glutamine 93 is a topological domain, periplasmic. A helical transmembrane segment spans residues 94–114 (TVPLGIAVALEFTGPLAVALF). The Cytoplasmic segment spans residues 115–118 (SSRR). Residues 119–139 (PVDFVWVVLAVLGLWFLLPLG) traverse the membrane as a helical segment. The Periplasmic portion of the chain corresponds to 140–146 (QDVSHVD). A helical membrane pass occupies residues 147–167 (LTGCALALGAGACWAIYILSG). The EamA 2 domain occupies 159–278 (CWAIYILSGQ…LGAIIAASMG (120 aa)). Residues 168–175 (QRAGAEHG) are Cytoplasmic-facing. A helical membrane pass occupies residues 176 to 196 (PATVAIGSLIAALIFVPIGAL). Topologically, residues 197–200 (QAGE) are periplasmic. The chain crosses the membrane as a helical span at residues 201–221 (ALWHWSVIPLGLAVAILSTAL). Residues 222–237 (PYSLEMIALTRLPTRT) lie on the Cytoplasmic side of the membrane. Residues 238–258 (FGTLMSMEPALAAVSGMIFLG) form a helical membrane-spanning segment. Residues 259-262 (ETLT) are Periplasmic-facing. Residues 263 to 283 (PIQLLALGAIIAASMGSTLTV) form a helical membrane-spanning segment. Residues 284–295 (RKESKIKELDIN) lie on the Cytoplasmic side of the membrane.

This sequence belongs to the drug/metabolite transporter (DMT) superfamily. 10 TMS drug/metabolite exporter (DME) (TC 2.A.7.3) family.

The protein resides in the cell inner membrane. Its function is as follows. Involved in the efflux of threonine and homoserine. The chain is Threonine/homoserine exporter RhtA (rhtA) from Escherichia coli O157:H7.